The chain runs to 275 residues: Elongation factor Ts (275 aa).

The interval 76–79 (TDFV) is involved in Mg(2+) ion dislocation from EF-Tu.

Belongs to the EF-Ts family.

It localises to the cytoplasm. Associates with the EF-Tu.GDP complex and induces the exchange of GDP to GTP. It remains bound to the aminoacyl-tRNA.EF-Tu.GTP complex up to the GTP hydrolysis stage on the ribosome. The polypeptide is Elongation factor Ts (Rhodococcus erythropolis (strain PR4 / NBRC 100887)).